Reading from the N-terminus, the 335-residue chain is Histidinol-phosphate aminotransferase (335 aa).

At lysine 202 the chain carries N6-(pyridoxal phosphate)lysine.

This sequence belongs to the class-II pyridoxal-phosphate-dependent aminotransferase family. Histidinol-phosphate aminotransferase subfamily. In terms of assembly, homodimer. Pyridoxal 5'-phosphate serves as cofactor.

It carries out the reaction L-histidinol phosphate + 2-oxoglutarate = 3-(imidazol-4-yl)-2-oxopropyl phosphate + L-glutamate. Its pathway is amino-acid biosynthesis; L-histidine biosynthesis; L-histidine from 5-phospho-alpha-D-ribose 1-diphosphate: step 7/9. The sequence is that of Histidinol-phosphate aminotransferase from Thermotoga sp. (strain RQ2).